Consider the following 689-residue polypeptide: Chloride channel protein ClC-Kb (689 aa).

At 1–51 the chain is on the cytoplasmic side; the sequence is MSRVLVIEQREGEEKTLIQKHIFRPFPNTRRVVIDHLQRLKNFLFRIGDDW. Helical transmembrane passes span 52–83 and 92–112; these read YFLFALGVIMALISFTMDFTVSKMLNAHRWLQ and LRYLSWIVYPIALVAFSTGFA. An intramembrane region (helical) is located at residues 117 to 128; it reads PHSGGSGIPELK. Ser-122 provides a ligand contact to chloride. 2 helical membrane-spanning segments follow: residues 142 to 161 and 162 to 181; these read IKNFGAKVVGLTCTLSAGST and MFLGKVGPFVHLSSMIAAYL. N-linked (GlcNAc...) asparagine glycosylation occurs at Asn-194. Positions 204-225 form an intramembrane region, helical; that stretch reads AAAAVGVSTVFGAPISGVLFSV. A helical transmembrane segment spans residues 237–256; that stretch reads YWRGFFAATCGAFVFRLLAV. Glu-260, Glu-262, Asp-279, and Glu-282 together coordinate Ca(2+). 2 consecutive transmembrane segments (helical) span residues 283-311 and 326-343; these read MFFFAILGVVCGLIGCAYLFCQRWLLGYV and PMYSALVALLISSITFPE. Positions 350 to 361 form an intramembrane region, helical; sequence ASRLTMKELLTS. 2 helical membrane passes run 402 to 422 and 423 to 442; these read GTLAFFIIMKFWMFILATTLP and MPAGYFMPVFVFGAAIGRLV. Phe-428 is a chloride binding site. Positions 466–498 form an intramembrane region, helical; sequence GGYAWQGAPAYSGAVTHSVSTALLAFEATGQIA. A helical membrane pass occupies residues 502-522; the sequence is PVILCVLIANAFTQKLQPSFY. Over 523-689 the chain is Cytoplasmic; that stretch reads DGTIIVKKLP…KAIEDLANPK (167 aa). CBS domains are found at residues 553–613 and 630–689; these read MNPD…SHER and ACSI…ANPK.

The protein belongs to the chloride channel (TC 2.A.49) family. N-glycosylated on a single asparagine, probably Asn-365 or Asn-375. In terms of tissue distribution, expressed in two distinct regions of the kidney; the proximal convoluted tubule and the diluting segment.

The protein resides in the cell membrane. Its function is as follows. Voltage-gated chloride channel. Chloride channels have several functions including the regulation of cell volume, the stabilization of membrane potential, signal transduction and transepithelial transport. This is Chloride channel protein ClC-Kb (clcnkb) from Xenopus laevis (African clawed frog).